A 434-amino-acid polypeptide reads, in one-letter code: ATP-dependent protease ATPase subunit HslU (434 aa).

ATP-binding positions include Ile-18, 60 to 65, Asp-247, Glu-312, and Arg-384; that span reads GVGKTE.

The protein belongs to the ClpX chaperone family. HslU subfamily. A double ring-shaped homohexamer of HslV is capped on each side by a ring-shaped HslU homohexamer. The assembly of the HslU/HslV complex is dependent on binding of ATP.

The protein resides in the cytoplasm. ATPase subunit of a proteasome-like degradation complex; this subunit has chaperone activity. The binding of ATP and its subsequent hydrolysis by HslU are essential for unfolding of protein substrates subsequently hydrolyzed by HslV. HslU recognizes the N-terminal part of its protein substrates and unfolds these before they are guided to HslV for hydrolysis. The protein is ATP-dependent protease ATPase subunit HslU of Brucella ovis (strain ATCC 25840 / 63/290 / NCTC 10512).